The primary structure comprises 496 residues: Trimethylamine methyltransferase MttB (496 aa).

Position 331 (Pyl-331) is a non-standard amino acid, pyrrolysine.

Belongs to the trimethylamine methyltransferase family.

The enzyme catalyses Co(I)-[trimethylamine-specific corrinoid protein] + trimethylamine + H(+) = methyl-Co(III)-[trimethylamine-specific corrinoid protein] + dimethylamine. Its function is as follows. Catalyzes the transfer of a methyl group from trimethylamine to the corrinoid cofactor of MttC. The sequence is that of Trimethylamine methyltransferase MttB from Desulfitobacterium hafniense (strain DSM 10664 / DCB-2).